The chain runs to 414 residues: Relaxin-3 receptor 2 (414 aa).

The Extracellular segment spans residues 1 to 43 (MATSNSSASLPTLFWVNGSGDSVLSTDGAAMPVQFLVLRIMVA). Asn-5 and Asn-17 each carry an N-linked (GlcNAc...) asparagine glycan. A helical transmembrane segment spans residues 44–64 (LAYGLVGIIGLLGNLAVLWVL). Topologically, residues 65–77 (GNCGQRVPGLSSD) are cytoplasmic. Residues 78–98 (TFVFSLALADLGLALTLPFWA) traverse the membrane as a helical segment. The Extracellular segment spans residues 99–116 (TESAMDFHWPFGSALCKV). Cys-114 and Cys-191 form a disulfide bridge. A helical membrane pass occupies residues 117-137 (VLTTTVLSIYASTFLITALSI). Residues 138–155 (ARYWVVAMAVGPGSHLSV) lie on the Cytoplasmic side of the membrane. The chain crosses the membrane as a helical span at residues 156–176 (FWARVVTLAVWVAAALVTVPT). Topologically, residues 177–209 (AIFGAEVELWGVCLCLLRFPSRYWLGAYQLQRV) are extracellular. Residues 210 to 230 (VLAFIVPLGVITTSYLLLLAF) form a helical membrane-spanning segment. Topologically, residues 231–255 (LERQQRCRPRQWQDSRVVARSVRVL) are cytoplasmic. A helical membrane pass occupies residues 256 to 276 (VASFALCWVPNHVVTLWEILV). The Extracellular segment spans residues 277 to 293 (RFDLVPWDSTFYTFHTY). A helical transmembrane segment spans residues 294–316 (ILPITTCLAHSNSCLNPVIYCLL). At 317–414 (RREPQQVLVS…SQAAVSPGEV (98 aa)) the chain is on the cytoplasmic side.

The protein belongs to the G-protein coupled receptor 1 family. In terms of tissue distribution, detected only in bone marrow.

It is found in the cell membrane. In terms of biological role, high affinity receptor for INSL5. Also acts as a receptor for RLN3/relaxin-3, as well as bradykinin and kallidin. Binding of the ligand inhibit cAMP accumulation. The chain is Relaxin-3 receptor 2 (Rxfp4) from Mus musculus (Mouse).